A 72-amino-acid chain; its full sequence is MIIPIRCFTCGRPIAHLWEKYVELIEEEGMEPGEALDELGVDRYCCRRMFLSHVDLLEESLPYTPPRLGMPR.

Residues C7, C10, C45, and C46 each coordinate Zn(2+).

The protein belongs to the archaeal Rpo10/eukaryotic RPB10 RNA polymerase subunit family. Part of the RNA polymerase complex. It depends on Zn(2+) as a cofactor.

The protein resides in the cytoplasm. It carries out the reaction RNA(n) + a ribonucleoside 5'-triphosphate = RNA(n+1) + diphosphate. Functionally, DNA-dependent RNA polymerase (RNAP) catalyzes the transcription of DNA into RNA using the four ribonucleoside triphosphates as substrates. The sequence is that of DNA-directed RNA polymerase subunit Rpo10 from Methanopyrus kandleri (strain AV19 / DSM 6324 / JCM 9639 / NBRC 100938).